Consider the following 239-residue polypeptide: Norbelladine 4'-O-methyltransferase (239 aa).

S-adenosyl-L-methionine contacts are provided by residues Val55, Glu77, 79 to 80, Ser85, Asp103, and Ala132; that span reads GV. Asp155 is a binding site for a divalent metal cation. Asp157 contacts S-adenosyl-L-methionine. A divalent metal cation-binding residues include Asp181 and Asn182.

The protein belongs to the class I-like SAM-binding methyltransferase superfamily. Cation-dependent O-methyltransferase family. Requires Mg(2+) as cofactor. In terms of tissue distribution, mostly expressed in bulbs, and, to a lower extent, in stems and roots.

It catalyses the reaction norbelladine + S-adenosyl-L-methionine = 4'-O-methylnorbelladine + S-adenosyl-L-homocysteine + H(+). The protein operates within alkaloid biosynthesis. In terms of biological role, 4'-O-methyltransferase converting norbelladine to 4'-O-methylnorbelladine. 4'-O-methylnorbelladine is a precursor to all Amaryllidaceae alkaloids such as galanthamine, lycorine and haemanthamine, and including haemanthamine- and crinamine-type alkaloids, promising anticancer agents. This chain is Norbelladine 4'-O-methyltransferase, found in Narcissus pseudonarcissus (Daffodil).